The chain runs to 849 residues: Thrombospondin type-1 domain-containing protein 1 (849 aa).

The N-terminal stretch at 1-24 is a signal peptide; that stretch reads MKQTLKDFSNLLLVVLCDYVLGEA. Residues 25–413 are Extracellular-facing; that stretch reads EHLVLGEPGH…QPQAPVKSNN (389 aa). Residues Asn39, Asn50, Asn55, Asn66, Asn77, Asn106, and Asn303 are each glycosylated (N-linked (GlcNAc...) asparagine). Residues 340–393 enclose the TSP type-1 domain; the sequence is IETWGLWQPWSQCSASCGDGVRERRRVCLTSSPSRPGCPGMSSETSPCSLEDCA. 3 cysteine pairs are disulfide-bonded: Cys352–Cys387, Cys356–Cys392, and Cys367–Cys377. A helical membrane pass occupies residues 414–434; that stretch reads VVTVTGISLCLFIIVATVLIT. Topologically, residues 435–849 are cytoplasmic; that stretch reads LWRKLGRAPK…STLSVEKLVI (415 aa). At Ser463 the chain carries Phosphoserine. Disordered stretches follow at residues 472-516, 595-799, and 828-849; these read SEPR…SESF, KSPF…KCQS, and GYFGSNEEDETTSTLSVEKLVI. Residues 479–493 are compositionally biased toward low complexity; sequence SDAGDGPAGSPGDPG. Positions 636–651 are enriched in basic residues; sequence SQVRSHSRGSHFRRTA. Basic and acidic residues predominate over residues 652 to 666; it reads SFHEARQARPFRERS. Residues 720-732 are compositionally biased toward pro residues; sequence SPLPKPHSLGPPP.

As to quaternary structure, part of a complex composed of THSD1, PTK2/FAK1, TLN1 and VCL. Interacts with TLN1.

Its subcellular location is the endosome membrane. The protein resides in the cell junction. The protein localises to the focal adhesion. Functionally, is a positive regulator of nascent focal adhesion assembly, involved in the modulation of endothelial cell attachment to the extracellular matrix. This Bos taurus (Bovine) protein is Thrombospondin type-1 domain-containing protein 1 (THSD1).